The chain runs to 243 residues: MGHKIHPSGLRLGITQEHRSKWFATSKTYPILLQEDFKIRTFIQKKYGAAGISDVLIARKADQLELELKTARPGVIVGRQGSGIEELRAGIQKTIGDNTRQVRINVVEVERVDADAFLLAEYISQQLEKRVAFRRTIRMALQRAQRAGVLGLKIQVGGRLNGAEIARTEWTREGRVPLHTLRAEIDYATREANTTYGVLGIKVWVFKGEVLPKEEKTIPVGASPKRKAGRRPQQFEDRSNENS.

Residues 39–110 (IRTFIQKKYG…QVRINVVEVE (72 aa)) enclose the KH type-2 domain. The interval 216 to 243 (KTIPVGASPKRKAGRRPQQFEDRSNENS) is disordered. The span at 233–243 (QQFEDRSNENS) shows a compositional bias: basic and acidic residues.

This sequence belongs to the universal ribosomal protein uS3 family. Part of the 30S ribosomal subunit. Forms a tight complex with proteins S10 and S14.

Its function is as follows. Binds the lower part of the 30S subunit head. Binds mRNA in the 70S ribosome, positioning it for translation. This is Small ribosomal subunit protein uS3 from Prochlorococcus marinus (strain MIT 9312).